Reading from the N-terminus, the 470-residue chain is FK506-binding protein 4 (470 aa).

Disordered regions lie at residues 40-101 (DEEP…KEKA), 114-163 (EEAM…GLEL), and 210-358 (PIDP…QTTG). 4 stretches are compositionally biased toward acidic residues: residues 68-91 (DLEDDSDDDYEDVDSDEESDDEEP), 115-131 (EAMDEDDEDEDEDEDGE), 150-163 (DSDEDDEEDEGLEL), and 218-254 (EDEDEEDEDDYDLSPDEDELALDLMGDDDNESDELDG). Basic and acidic residues-rich tracts occupy residues 268-291 (EPPKLVDTKGKNKRSAPADEEKPA) and 319-332 (EQKKEAKEGKEAKK). Residues 384 to 470 (GNTVAMRYIG…IFDVKLLEIK (87 aa)) form the PPIase FKBP-type domain.

It belongs to the FKBP-type PPIase family. FKBP3/4 subfamily. Binds to histones H3 and H4.

The protein resides in the nucleus. It catalyses the reaction [protein]-peptidylproline (omega=180) = [protein]-peptidylproline (omega=0). With respect to regulation, inhibited by both FK506 and rapamycin. PPIase that acts as a histone chaperone. Histone proline isomerase that increases the rate of cis-trans isomerization at prolines on the histone H3 N-terminal tail. Proline isomerization influences H3 methylation thereby regulating gene expression. The chain is FK506-binding protein 4 (fpr4) from Aspergillus oryzae (strain ATCC 42149 / RIB 40) (Yellow koji mold).